Consider the following 706-residue polypeptide: Kinesin-like protein KIP2 (706 aa).

Composition is skewed to low complexity over residues 1 to 28 (MIQKMSPSLRRPSTRSSSGSSNIPQSPS) and 36 to 63 (SNLTRNSIRSTSNSGSQSISASSTRSNS). The tract at residues 1-139 (MIQKMSPSLR…QPRSNSHHGS (139 aa)) is disordered. Positions 102 to 493 (SITVTIRPKP…LRFASRAKNV (392 aa)) constitute a Kinesin motor domain. Over residues 127–139 (RYSQPRSNSHHGS) the composition is skewed to polar residues. 202 to 209 (GMTGSGKT) contacts ATP. The interval 413-445 (VGSNIPSPSASGSSSSSGNATNNGTSPSNHIPY) is disordered. Residues 414 to 441 (GSNIPSPSASGSSSSSGNATNNGTSPSN) are compositionally biased toward low complexity. 3 coiled-coil regions span residues 507 to 541 (NNDGDKDRTIELLRRQLEEQRRMISELKNRSNIGE), 569 to 589 (MRAENRVLKYKLENCEKLLDK), and 612 to 689 (TLLE…RALK).

Belongs to the TRAFAC class myosin-kinesin ATPase superfamily. Kinesin family. Might be dimeric.

Its subcellular location is the cytoplasm. It is found in the cytoskeleton. Required for assembly of the mitotic spindle. This Saccharomyces cerevisiae (strain ATCC 204508 / S288c) (Baker's yeast) protein is Kinesin-like protein KIP2 (KIP2).